We begin with the raw amino-acid sequence, 353 residues long: Photosystem II D2 protein (353 aa).

The residue at position 2 (Thr2) is an N-acetylthreonine. Thr2 bears the Phosphothreonine mark. A helical transmembrane segment spans residues 41 to 61 (CAYFALGGWFTGTTFVTSWYT). His118 contributes to the chlorophyll a binding site. Residues 125–141 (GFMLRQFELARSVQLRP) traverse the membrane as a helical segment. 2 residues coordinate pheophytin a: Gln130 and Asn143. Residues 153-166 (VFVSVFLIYPLGQS) traverse the membrane as a helical segment. His198 lines the chlorophyll a pocket. Residues 208 to 228 (AALLCAIHGATVENTLFEDGD) traverse the membrane as a helical segment. Residues His215 and Phe262 each coordinate a plastoquinone. Position 215 (His215) interacts with Fe cation. His269 contacts Fe cation. The chain crosses the membrane as a helical span at residues 279–295 (GLWMSALGVVGLALNLR).

It belongs to the reaction center PufL/M/PsbA/D family. In terms of assembly, PSII is composed of 1 copy each of membrane proteins PsbA, PsbB, PsbC, PsbD, PsbE, PsbF, PsbH, PsbI, PsbJ, PsbK, PsbL, PsbM, PsbT, PsbX, PsbY, PsbZ, Psb30/Ycf12, at least 3 peripheral proteins of the oxygen-evolving complex and a large number of cofactors. It forms dimeric complexes. Requires The D1/D2 heterodimer binds P680, chlorophylls that are the primary electron donor of PSII, and subsequent electron acceptors. It shares a non-heme iron and each subunit binds pheophytin, quinone, additional chlorophylls, carotenoids and lipids. There is also a Cl(-1) ion associated with D1 and D2, which is required for oxygen evolution. The PSII complex binds additional chlorophylls, carotenoids and specific lipids. as cofactor.

It is found in the plastid. Its subcellular location is the chloroplast thylakoid membrane. The enzyme catalyses 2 a plastoquinone + 4 hnu + 2 H2O = 2 a plastoquinol + O2. Photosystem II (PSII) is a light-driven water:plastoquinone oxidoreductase that uses light energy to abstract electrons from H(2)O, generating O(2) and a proton gradient subsequently used for ATP formation. It consists of a core antenna complex that captures photons, and an electron transfer chain that converts photonic excitation into a charge separation. The D1/D2 (PsbA/PsbD) reaction center heterodimer binds P680, the primary electron donor of PSII as well as several subsequent electron acceptors. D2 is needed for assembly of a stable PSII complex. In Ranunculus macranthus (Large buttercup), this protein is Photosystem II D2 protein.